The chain runs to 414 residues: 3-phosphoshikimate 1-carboxyvinyltransferase (414 aa).

The 3-phosphoshikimate site is built by Lys20, Ser21, and Arg25. Lys20 is a binding site for phosphoenolpyruvate. Arg113 lines the phosphoenolpyruvate pocket. Residues Ser154, Ser155, Gln156, Ser181, Asp296, and Lys323 each contribute to the 3-phosphoshikimate site. Gln156 lines the phosphoenolpyruvate pocket. Asp296 serves as the catalytic Proton acceptor. Phosphoenolpyruvate-binding residues include Arg327, Arg371, and Lys395.

This sequence belongs to the EPSP synthase family. In terms of assembly, monomer.

The protein localises to the cytoplasm. The enzyme catalyses 3-phosphoshikimate + phosphoenolpyruvate = 5-O-(1-carboxyvinyl)-3-phosphoshikimate + phosphate. It functions in the pathway metabolic intermediate biosynthesis; chorismate biosynthesis. Its function is as follows. Catalyzes the transfer of the enolpyruvyl moiety of phosphoenolpyruvate (PEP) to the 5-hydroxyl of shikimate-3-phosphate (S3P) to produce enolpyruvyl shikimate-3-phosphate and inorganic phosphate. The chain is 3-phosphoshikimate 1-carboxyvinyltransferase from Saccharolobus solfataricus (strain ATCC 35092 / DSM 1617 / JCM 11322 / P2) (Sulfolobus solfataricus).